The chain runs to 410 residues: 26S proteasome non-ATPase regulatory subunit 6 (410 aa).

The PCI domain occupies 207–382 (DFAGAADLFL…GVIEVNHRDS (176 aa)).

This sequence belongs to the proteasome subunit S10 family. In terms of tissue distribution, expressed in multiple tissues including the intestine, pharynx and hypodermis.

In terms of biological role, acts as a regulatory subunit of the 26S proteasome which is involved in the ATP-dependent degradation of ubiquitinated proteins. In Caenorhabditis elegans, this protein is 26S proteasome non-ATPase regulatory subunit 6 (rpn-7).